Consider the following 122-residue polypeptide: Large ribosomal subunit protein uL14c (122 aa).

The protein belongs to the universal ribosomal protein uL14 family. Part of the 50S ribosomal subunit.

The protein resides in the plastid. It is found in the chloroplast. Binds to 23S rRNA. This is Large ribosomal subunit protein uL14c from Tupiella akineta (Green alga).